We begin with the raw amino-acid sequence, 455 residues long: DNA N(6)-methyladenine demethylase ALKBH1C (455 aa).

Disordered regions lie at residues 1-114 (MNHS…AGDN) and 173-194 (SSVEDQKSAPKADGAGNSSNES). The region spanning 345–455 (LPDICIVNFY…GRLNLTFRQY (111 aa)) is the Fe2OG dioxygenase domain. 2-oxoglutarate is bound at residue 352–354 (NFY). Residues H363, D365, and H423 each coordinate Fe cation. Residue 447-453 (RLNLTFR) coordinates 2-oxoglutarate.

Belongs to the alkB family. Fe(2+) is required as a cofactor. As to expression, expressed at low levels in roots and seedlings, but barely in cauline leaves, rosette leaves, stems, siliques and flowers.

The protein localises to the nucleus. It is found in the cytoplasm. It carries out the reaction an N(6)-methyl-2'-deoxyadenosine in DNA + 2-oxoglutarate + O2 = a 2'-deoxyadenosine in DNA + formaldehyde + succinate + CO2. In terms of biological role, dioxygenase that catalyzes DNA N(6)-methyladenine (6 mA) demethylation with a low efficiency. The polypeptide is DNA N(6)-methyladenine demethylase ALKBH1C (Arabidopsis thaliana (Mouse-ear cress)).